We begin with the raw amino-acid sequence, 63 residues long: Large ribosomal subunit protein uL29 (63 aa).

This sequence belongs to the universal ribosomal protein uL29 family.

This chain is Large ribosomal subunit protein uL29, found in Neisseria meningitidis serogroup C (strain 053442).